A 287-amino-acid chain; its full sequence is Nucleotide-binding protein Ppro_0977 (287 aa).

Position 8–15 (8–15 (GMSGSGKS)) interacts with ATP. 59–62 (DIRG) is a binding site for GTP.

The protein belongs to the RapZ-like family.

In terms of biological role, displays ATPase and GTPase activities. This chain is Nucleotide-binding protein Ppro_0977, found in Pelobacter propionicus (strain DSM 2379 / NBRC 103807 / OttBd1).